The chain runs to 414 residues: uncharacterized protein (414 aa).

The segment at Leu-204 to Asp-230 is disordered. Over residues Asp-220 to Asp-230 the composition is skewed to basic and acidic residues.

Belongs to the CdaR family.

This is an uncharacterized protein from Mycobacterium tuberculosis (strain CDC 1551 / Oshkosh).